The primary structure comprises 99 residues: Large ribosomal subunit protein uL23 (99 aa).

Belongs to the universal ribosomal protein uL23 family. Part of the 50S ribosomal subunit. Contacts protein L29, and trigger factor when it is bound to the ribosome.

Functionally, one of the early assembly proteins it binds 23S rRNA. One of the proteins that surrounds the polypeptide exit tunnel on the outside of the ribosome. Forms the main docking site for trigger factor binding to the ribosome. The sequence is that of Large ribosomal subunit protein uL23 from Azotobacter vinelandii (strain DJ / ATCC BAA-1303).